We begin with the raw amino-acid sequence, 151 residues long: 3-hydroxyacyl-[acyl-carrier-protein] dehydratase FabZ (151 aa).

His54 is an active-site residue.

Belongs to the thioester dehydratase family. FabZ subfamily.

Its subcellular location is the cytoplasm. The catalysed reaction is a (3R)-hydroxyacyl-[ACP] = a (2E)-enoyl-[ACP] + H2O. Its function is as follows. Involved in unsaturated fatty acids biosynthesis. Catalyzes the dehydration of short chain beta-hydroxyacyl-ACPs and long chain saturated and unsaturated beta-hydroxyacyl-ACPs. The polypeptide is 3-hydroxyacyl-[acyl-carrier-protein] dehydratase FabZ (Blochmanniella pennsylvanica (strain BPEN)).